The sequence spans 909 residues: Protein virilizer (909 aa).

The segment covering 746–784 (STSKNTNTNVSKQQQQPQNSTPCSSNRFLFNKSSLISQE) has biased composition (polar residues). The disordered stretch occupies residues 746–824 (STSKNTNTNV…TNMTRQPTTL (79 aa)). Over residues 785 to 799 (SNGSNNNSGTQGPGS) the composition is skewed to low complexity. Residues 800–810 (MNESYSLDNSF) show a composition bias toward polar residues. Low complexity predominate over residues 811 to 824 (NTTNTNMTRQPTTL). Residues S856 and S898 each carry the phosphoserine modification.

It belongs to the vir family. In terms of assembly, component of the MIS (mRNA N6-methyladenosine (m6A) methylation) complex, at least composed of IME4, KAR4, MUM2, SLZ1, and VIR1. Interacts with KAR4. Interacts with SLZ1. Interacts with MUM2. Interacts with IME4.

The protein localises to the cytoplasm. It localises to the nucleus. Its subcellular location is the nucleolus. In terms of biological role, component of the MIS complex, a complex that mediates N6-methyladenosine (m6A) methylation of meiotic mRNAs and is required for initiation of meiosis, progression through the meiotic divisions and sporulation. In the complex, performs a scaffolding role stabilizing the other complex members. In Saccharomyces cerevisiae (strain ATCC 204508 / S288c) (Baker's yeast), this protein is Protein virilizer.